A 315-amino-acid polypeptide reads, in one-letter code: Initiation factor TFIIB homolog (315 aa).

Belongs to the asfivirus C315R family.

Putative initation factor. The sequence is that of Initiation factor TFIIB homolog from African swine fever virus (strain Badajoz 1971 Vero-adapted) (Ba71V).